A 98-amino-acid polypeptide reads, in one-letter code: Putative pterin-4-alpha-carbinolamine dehydratase (98 aa).

This sequence belongs to the pterin-4-alpha-carbinolamine dehydratase family.

It catalyses the reaction (4aS,6R)-4a-hydroxy-L-erythro-5,6,7,8-tetrahydrobiopterin = (6R)-L-erythro-6,7-dihydrobiopterin + H2O. This is Putative pterin-4-alpha-carbinolamine dehydratase from Parasynechococcus marenigrum (strain WH8102).